The chain runs to 578 residues: MKDTIRQLIQQAITQLVTEGVLPEGLTPAIQVENTRDKTHGDFASNIAMMLAKPAGMKPRDLAEKIIAALPAHEDLSKAEIAGPGFINFFQNTQALAARLDAALGDDHLGVRKAGPAQRTVIDMSAPNLAKEMHVGHLRSTIIGDGVARVLEFLGDTVIRQNHVGDWGTQFGMLMAYLEENPITSDELSDLENFYRAAKQRFDESEAFADRARGLVVKLQAGDPDCLELWTKFKDISLSHCQKIYELLNVKLTMADVMGESAYNDDLINVVNDLKAQGLLVESNGAQCVFLDEFKNAEGEPLPVIIVKADGGYLYATTDLAAVRYRSGKLKADRALYFVDQRQALHFQQVFAVARKAGFVTHPMEMEHMGFGTMNGADGRPFKTRDGGTVKLIDLLTEAEERAYALVKEKNPQLPEADLRSIAKVVGIDSVKYADLSKHRTSDYSFNFDLMLNFEGNTAPYLLYAYTRAAGVFRKLGKDFSEVGGQIELHAAQELELAAKLAQFGEILNNVAEKGTPHILCTYLYDVAGLFSSFYENCPILAAETPTQMHSRLRLTELTRRTLKQGLELLGLKVLEQM.

Positions 127 to 137 (PNLAKEMHVGH) match the 'HIGH' region motif.

It belongs to the class-I aminoacyl-tRNA synthetase family. Monomer.

Its subcellular location is the cytoplasm. It carries out the reaction tRNA(Arg) + L-arginine + ATP = L-arginyl-tRNA(Arg) + AMP + diphosphate. This Pseudomonas fluorescens (strain ATCC BAA-477 / NRRL B-23932 / Pf-5) protein is Arginine--tRNA ligase.